A 313-amino-acid chain; its full sequence is Porphobilinogen deaminase (313 aa).

C242 is modified (S-(dipyrrolylmethanemethyl)cysteine).

Belongs to the HMBS family. Monomer. Dipyrromethane is required as a cofactor.

It carries out the reaction 4 porphobilinogen + H2O = hydroxymethylbilane + 4 NH4(+). Its pathway is porphyrin-containing compound metabolism; protoporphyrin-IX biosynthesis; coproporphyrinogen-III from 5-aminolevulinate: step 2/4. Its function is as follows. Tetrapolymerization of the monopyrrole PBG into the hydroxymethylbilane pre-uroporphyrinogen in several discrete steps. The protein is Porphobilinogen deaminase of Enterobacter sp. (strain 638).